A 374-amino-acid chain; its full sequence is Queuine tRNA-ribosyltransferase (374 aa).

Asp-89 functions as the Proton acceptor in the catalytic mechanism. Substrate is bound by residues 89 to 93 (DSGGF), Asp-143, Gln-187, and Gly-214. The tract at residues 245-251 (GVGKPED) is RNA binding. The active-site Nucleophile is the Asp-264. The tract at residues 269–273 (TRNAR) is RNA binding; important for wobble base 34 recognition. The Zn(2+) site is built by Cys-302, Cys-304, Cys-307, and His-333.

The protein belongs to the queuine tRNA-ribosyltransferase family. In terms of assembly, homodimer. Within each dimer, one monomer is responsible for RNA recognition and catalysis, while the other monomer binds to the replacement base PreQ1. Zn(2+) serves as cofactor.

The enzyme catalyses 7-aminomethyl-7-carbaguanine + guanosine(34) in tRNA = 7-aminomethyl-7-carbaguanosine(34) in tRNA + guanine. The protein operates within tRNA modification; tRNA-queuosine biosynthesis. In terms of biological role, catalyzes the base-exchange of a guanine (G) residue with the queuine precursor 7-aminomethyl-7-deazaguanine (PreQ1) at position 34 (anticodon wobble position) in tRNAs with GU(N) anticodons (tRNA-Asp, -Asn, -His and -Tyr). Catalysis occurs through a double-displacement mechanism. The nucleophile active site attacks the C1' of nucleotide 34 to detach the guanine base from the RNA, forming a covalent enzyme-RNA intermediate. The proton acceptor active site deprotonates the incoming PreQ1, allowing a nucleophilic attack on the C1' of the ribose to form the product. After dissociation, two additional enzymatic reactions on the tRNA convert PreQ1 to queuine (Q), resulting in the hypermodified nucleoside queuosine (7-(((4,5-cis-dihydroxy-2-cyclopenten-1-yl)amino)methyl)-7-deazaguanosine). The sequence is that of Queuine tRNA-ribosyltransferase from Shewanella loihica (strain ATCC BAA-1088 / PV-4).